The primary structure comprises 327 residues: tRNA dimethylallyltransferase (327 aa).

14 to 21 contacts ATP; that stretch reads GPTASGKT. A substrate-binding site is contributed by 16–21; it reads TASGKT. 2 interaction with substrate tRNA regions span residues 39-42 and 163-167; these read DSAL and QRIQR.

This sequence belongs to the IPP transferase family. Monomer. Requires Mg(2+) as cofactor.

The enzyme catalyses adenosine(37) in tRNA + dimethylallyl diphosphate = N(6)-dimethylallyladenosine(37) in tRNA + diphosphate. Functionally, catalyzes the transfer of a dimethylallyl group onto the adenine at position 37 in tRNAs that read codons beginning with uridine, leading to the formation of N6-(dimethylallyl)adenosine (i(6)A). The protein is tRNA dimethylallyltransferase of Xanthomonas oryzae pv. oryzae (strain MAFF 311018).